The primary structure comprises 208 residues: TnpB-like protein MJ0012 (208 aa).

Residues C83, C86, C100, and C103 each coordinate Zn(2+).

It belongs to the transposase 35 family.

The protein is TnpB-like protein MJ0012 of Methanocaldococcus jannaschii (strain ATCC 43067 / DSM 2661 / JAL-1 / JCM 10045 / NBRC 100440) (Methanococcus jannaschii).